Consider the following 326-residue polypeptide: Beta-ketoacyl-[acyl-carrier-protein] synthase III (326 aa).

Residues cysteine 112 and histidine 251 contribute to the active site. The tract at residues 252-256 is ACP-binding; sequence QANSR. Asparagine 281 is an active-site residue.

Belongs to the thiolase-like superfamily. FabH family. In terms of assembly, homodimer.

Its subcellular location is the cytoplasm. The catalysed reaction is malonyl-[ACP] + acetyl-CoA + H(+) = 3-oxobutanoyl-[ACP] + CO2 + CoA. It functions in the pathway lipid metabolism; fatty acid biosynthesis. Catalyzes the condensation reaction of fatty acid synthesis by the addition to an acyl acceptor of two carbons from malonyl-ACP. Catalyzes the first condensation reaction which initiates fatty acid synthesis and may therefore play a role in governing the total rate of fatty acid production. Possesses both acetoacetyl-ACP synthase and acetyl transacylase activities. Its substrate specificity determines the biosynthesis of branched-chain and/or straight-chain of fatty acids. The protein is Beta-ketoacyl-[acyl-carrier-protein] synthase III of Clostridium botulinum (strain Kyoto / Type A2).